The sequence spans 159 residues: Urease accessory protein UreE (159 aa).

Residues 140 to 159 form a disordered region; the sequence is GAYHGTGHHHHGHGHDPHHG.

This sequence belongs to the UreE family.

It is found in the cytoplasm. Its function is as follows. Involved in urease metallocenter assembly. Binds nickel. Probably functions as a nickel donor during metallocenter assembly. In Sinorhizobium fredii (strain NBRC 101917 / NGR234), this protein is Urease accessory protein UreE.